A 516-amino-acid chain; its full sequence is Melianol synthase CYP71BQ17 (516 aa).

A helical membrane pass occupies residues 14-34 (MPHLPSLPVSLSFLLFFLMLV). Position 454 (Cys-454) interacts with heme.

The protein belongs to the cytochrome P450 family. Requires heme as cofactor. Mainly expressed in roots and, to a lesser extent, in stems and old leaves.

The protein localises to the membrane. The enzyme catalyses dihydroniloticin + 2 reduced [NADPH--hemoprotein reductase] + 2 O2 = melianol + 2 oxidized [NADPH--hemoprotein reductase] + 3 H2O + 2 H(+). Its pathway is secondary metabolite biosynthesis; terpenoid biosynthesis. Monooxygenase involved in the biosynthesis of quassinoids triterpene natural products such as ailanthone, chaparrinone, glaucarubinone and amarolide, allelopathic degraded triterpene lactones inhibiting the growth of other plants, and possessing antimalarial, antifeedant, insecticidal, anti-inflammatory and anticancer activities. Catalyzes the conversion of dihydroniloticin to the protolimonoid melianol. The polypeptide is Melianol synthase CYP71BQ17 (Ailanthus altissima (Tree-of-heaven)).